We begin with the raw amino-acid sequence, 1385 residues long: DNA-directed RNA polymerase subunit beta (1385 aa).

Belongs to the RNA polymerase beta chain family. The RNAP catalytic core consists of 2 alpha, 1 beta, 1 beta' and 1 omega subunit. When a sigma factor is associated with the core the holoenzyme is formed, which can initiate transcription.

It catalyses the reaction RNA(n) + a ribonucleoside 5'-triphosphate = RNA(n+1) + diphosphate. In terms of biological role, DNA-dependent RNA polymerase catalyzes the transcription of DNA into RNA using the four ribonucleoside triphosphates as substrates. The sequence is that of DNA-directed RNA polymerase subunit beta from Jannaschia sp. (strain CCS1).